Consider the following 414-residue polypeptide: Serine/threonine transporter SstT (414 aa).

8 helical membrane-spanning segments follow: residues 22–42, 54–74, 89–109, 148–168, 189–209, 223–243, 305–325, and 337–357; these read GLVL…TIGF, IFVK…VMAA, IIVL…IAGF, AIFK…GLAL, IVHV…AETL, LLAV…PILV, MAGA…TLGL, and IVAA…LLLI.

It belongs to the dicarboxylate/amino acid:cation symporter (DAACS) (TC 2.A.23) family.

It localises to the cell inner membrane. It carries out the reaction L-serine(in) + Na(+)(in) = L-serine(out) + Na(+)(out). The enzyme catalyses L-threonine(in) + Na(+)(in) = L-threonine(out) + Na(+)(out). In terms of biological role, involved in the import of serine and threonine into the cell, with the concomitant import of sodium (symport system). The protein is Serine/threonine transporter SstT of Haemophilus influenzae (strain 86-028NP).